The chain runs to 146 residues: Large ribosomal subunit protein uL15 (146 aa).

The segment covering 1–13 (MKLHELKPAEGSR) has biased composition (basic and acidic residues). The interval 1-52 (MKLHELKPAEGSRKVRNRVGRGIGSGNGKTAGKGHKGQNARSGGGVRLGFEG) is disordered. 2 stretches are compositionally biased toward gly residues: residues 21–31 (RGIGSGNGKTA) and 42–52 (SGGGVRLGFEG).

The protein belongs to the universal ribosomal protein uL15 family. In terms of assembly, part of the 50S ribosomal subunit.

Its function is as follows. Binds to the 23S rRNA. This chain is Large ribosomal subunit protein uL15, found in Bacillus anthracis (strain A0248).